We begin with the raw amino-acid sequence, 386 residues long: uncharacterized protein (386 aa).

2 helical membrane-spanning segments follow: residues 54 to 74 (AVLQ…AIVA) and 347 to 367 (LLGG…PIAG).

The protein to M.tuberculosis Rv0628c.

It is found in the cell membrane. This is an uncharacterized protein from Mycobacterium tuberculosis (strain CDC 1551 / Oshkosh).